Here is a 443-residue protein sequence, read N- to C-terminus: MNKLNVEVLKKQFPLVEQLINLDEVCWFNPNVTSLEEGLPHVGLNAEDIHVASARLKRFAPYLMKAFPETKAASGLIESPVVDIPKMKAALETQYNVPIFGRLMLKLDSHLPISGSIKARGGIYEVLVHAEKLAIATGLLSESDDYSKLLSGEFRQFFQQYSIAVGSTGNLGMSIGMMSAKLGFSVSVHMSADAREWKKNKLRSHGVNVVEYEQDYGVAVEQGRKQAESDPNCFFIDDENSQTLFLGYSVAGERLKQQFDDLGIVVDERHPLFVYLPCGVGGGPGGVAFGLKVAFGDHVHCIFAEPTHSPCMLLGVHTGLHDEIAVQDIGIDNLTAADGLAVGRPSGFVGRAMERLIDGYYTVTDERMYQLLGELSEREGINLEPSALAGMMGAVHVSGSLHYQTRLQLTDERLKNATHLVWATGGGMVPEAEMSADLAKSGR.

Lys-118 carries the N6-(pyridoxal phosphate)lysine modification.

Belongs to the serine/threonine dehydratase family. DsdA subfamily. Pyridoxal 5'-phosphate serves as cofactor.

The catalysed reaction is D-serine = pyruvate + NH4(+). This Vibrio parahaemolyticus serotype O3:K6 (strain RIMD 2210633) protein is Probable D-serine dehydratase.